We begin with the raw amino-acid sequence, 228 residues long: Ankyrin repeat domain-containing protein 46 (228 aa).

ANK repeat units follow at residues 11–40 (QTNVPLLQACIDGDFNYSKRLLESGFDPNI), 44–73 (RGRTGLHLAAARGNVDICQLLHKFGADLLA), 77–103 (QGNTALHLCGHVDTIQFLVSNGLKIDI), and 107–138 (QGATPLVLAKRRGVNKDVIRLLEFLEEQEVKG). Residues 195–215 (VLLLIFVIALLSLGIAYYVSG) form a helical membrane-spanning segment.

The protein localises to the membrane. This chain is Ankyrin repeat domain-containing protein 46 (ANKRD46), found in Pongo abelii (Sumatran orangutan).